A 380-amino-acid polypeptide reads, in one-letter code: Glucose-1-phosphate adenylyltransferase (380 aa).

Alpha-D-glucose 1-phosphate-binding positions include G164, 179–180 (EK), and S190.

The protein belongs to the bacterial/plant glucose-1-phosphate adenylyltransferase family. Homotetramer.

The enzyme catalyses alpha-D-glucose 1-phosphate + ATP + H(+) = ADP-alpha-D-glucose + diphosphate. It functions in the pathway glycan biosynthesis; glycogen biosynthesis. Functionally, involved in the biosynthesis of ADP-glucose, a building block required for the elongation reactions to produce glycogen. Catalyzes the reaction between ATP and alpha-D-glucose 1-phosphate (G1P) to produce pyrophosphate and ADP-Glc. The protein is Glucose-1-phosphate adenylyltransferase of Streptococcus pneumoniae serotype 2 (strain D39 / NCTC 7466).